The following is a 78-amino-acid chain: Large ribosomal subunit protein bL28 (78 aa).

The span at 1–20 (MSRVCQLTGTRANNGMSVSH) shows a compositional bias: polar residues. The tract at residues 1–23 (MSRVCQLTGTRANNGMSVSHSHI) is disordered.

This sequence belongs to the bacterial ribosomal protein bL28 family.

This chain is Large ribosomal subunit protein bL28, found in Prochlorococcus marinus (strain NATL2A).